A 338-amino-acid polypeptide reads, in one-letter code: Stage V sporulation protein AD (338 aa).

The protein is Stage V sporulation protein AD (spoVAD) of Bacillus subtilis (strain 168).